Reading from the N-terminus, the 605-residue chain is Sodium-independent sulfate anion transporter (605 aa).

The Extracellular segment spans residues 1-50 (MPSSLKGLGQAWLSSSSMALSACCSVSAWQKRLPVLAWLPRYSLQWLKMD). A helical membrane pass occupies residues 51-71 (FIAGLSVGLTVIPQALAYAEV). A topological domain (cytoplasmic) is located at residue alanine 72. The helical transmembrane segment at 73–93 (GLPPQYGLYSAFTGCFVYVFL) threads the bilayer. Over 94-98 (GTSRD) the chain is Extracellular. The helical transmembrane segment at 99 to 119 (VTLGPTAIMSLLVSFYTFHEP) threads the bilayer. Residues 120-122 (AYA) are Cytoplasmic-facing. The chain crosses the membrane as a helical span at residues 123–143 (VLLTFLSGCIQLAMGLLHLGF). Over 144–146 (LLD) the chain is Extracellular. A helical transmembrane segment spans residues 147–167 (FISCPVIKGFTSAAAIIIGFG). Residues 168-196 (QIKNLLGLHNIPRQFFLQVYHTFLSVGET) are Cytoplasmic-facing. A helical membrane pass occupies residues 197 to 217 (RLGDAILGLVCMVLLLVLKLM). The Extracellular segment spans residues 218–249 (RDRIPPVHPEMPLCVRLSCGLVWTTATARNAL). The chain crosses the membrane as a helical span at residues 250–270 (VVSFAALVAYSFEVTGYQPFI). Over 271-303 (LTGEIAKGLPPVRVPPFSVTMANGTVSFTRMVQ) the chain is Cytoplasmic. Residues 304–324 (DLGAGLAVVPLIGLLESIAVA) traverse the membrane as a helical segment. Residues 325-340 (KAFASQNDYHVDANQE) lie on the Extracellular side of the membrane. Residues 341 to 361 (LLAIGLTNMLGSFVSSYPITG) traverse the membrane as a helical segment. The Cytoplasmic portion of the chain corresponds to 362-373 (SFGRTAVNAQSG). The helical transmembrane segment at 374–394 (VCTPAGGLVTGALVLLSLDYL) threads the bilayer. At 395–397 (TSL) the chain is on the extracellular side. The chain crosses the membrane as a helical span at residues 398–418 (FYYIPKAALAAVIIMAVVPLF). Over 419 to 447 (DTKIFGMLWRVKRLDLLPLCATFLLCFWE) the chain is Cytoplasmic. The chain crosses the membrane as a helical span at residues 448–468 (VQYGILAGTLVSTLFLLHFVA). Over 469–605 (RPKTQVSEGP…PEHKVTLLTA (137 aa)) the chain is Extracellular. In terms of domain architecture, STAS spans 479-582 (VLILQLASGL…EKAEQYVRQE (104 aa)).

It belongs to the SLC26A/SulP transporter (TC 2.A.53) family.

It localises to the cell membrane. Its subcellular location is the lysosome membrane. It is found in the apical cell membrane. The protein resides in the basolateral cell membrane. The catalysed reaction is hydrogencarbonate(in) + chloride(out) = hydrogencarbonate(out) + chloride(in). It carries out the reaction sulfate(in) + H(+)(in) = sulfate(out) + H(+)(out). It catalyses the reaction oxalate(in) + chloride(out) = oxalate(out) + chloride(in). Functionally, sodium-independent anion exchanger mediating bicarbonate, chloride, sulfate and oxalate transport. Exhibits sodium-independent sulfate anion transporter activity that may cooperate with SLC26A2 to mediate DIDS-sensitive sulfate uptake into high endothelial venules endothelial cells (HEVEC). In the kidney, mediates chloride-bicarbonate exchange, facilitating V-ATPase-mediated acid secretion. May function as a chloride channel, playing an important role in moderating chloride homeostasis and neuronal activity in the cerebellum. The chain is Sodium-independent sulfate anion transporter (Slc26a11) from Cavia porcellus (Guinea pig).